The chain runs to 148 residues: NADPH-dependent 7-cyano-7-deazaguanine reductase (148 aa).

Residue C50 is the Thioimide intermediate of the active site. The active-site Proton donor is D57. Residues 72-74 (VES) and 91-92 (HE) contribute to the substrate site.

It belongs to the GTP cyclohydrolase I family. QueF type 1 subfamily.

Its subcellular location is the cytoplasm. It catalyses the reaction 7-aminomethyl-7-carbaguanine + 2 NADP(+) = 7-cyano-7-deazaguanine + 2 NADPH + 3 H(+). The protein operates within tRNA modification; tRNA-queuosine biosynthesis. In terms of biological role, catalyzes the NADPH-dependent reduction of 7-cyano-7-deazaguanine (preQ0) to 7-aminomethyl-7-deazaguanine (preQ1). This Helicobacter pylori (strain J99 / ATCC 700824) (Campylobacter pylori J99) protein is NADPH-dependent 7-cyano-7-deazaguanine reductase.